Reading from the N-terminus, the 1282-residue chain is MSSVSPSPLIALISSECSQKHAHNRGFKSLSHFIFPFTSHECQVREPIDNLKASQRIRLDIRDISSDGHLLTLSVLPYVLIQALKTCTDVSQSIKLFRDVLARCSEPSEHESFGHYLACIFVVSTEDENPLGEFSKMIQTQQTLYNTTSTLMIPGHCSTPKWAAPHAKTPRHYILLHDSRSPRSSTERRDELLAQMCATYGNDNCQMLQLDSDSESAEMKGVWDEIDEFNDVLEKGLEEAHQHSTDAIAPGPNGASNQQSPSSPTSSVATISSTMPAVGSVSPNSHPNSTVVWKSSKKLASLADAKAVQAILSKFLDVCLIPYVEKEMRFLYETAGQKKGIGKSFTSMKRWFGSGTALSNMATPITYAWDSSEMQTRRLADLLLMFGFPNSAFEQYRGLKRDLEADKAMAAHAVALEMCCVALHSAQPQLNANQFMIKYLETPVSLLIEHAKFRRYPSILRCAFNIADIYSDLGLHKEAALNLAKVSSIEGDHLVAVAQTLAAEQFEKAGMGRKASFHRVLAANRFSNAAIPALSFDCYRLALPAFDKKHWGVLDEHLAVRLLEEGQKAGVMTTDIASECIRRLVAVCPKLSPSLQTERLRTIVNALDIYFPHRNEPVEMLTDIPKVEMETVKAIYGERPLWNEIDENEHQSVSSDGWITVERAAHHALFGASAPYRGMQLVSDEHSDNQKIRETPAGERFRVMVDLTNPLKIPIHLQNLRLSVSDIHNQSGIEGSEKSIPELGALEHLQLDPEETKTIELYVFPRVGCLKFRVDGLLFQLAVDQKDVEARVPLKCRGKRLNKTAKQQKSKIYTNDERLSATVAQKPWPLVEFRVIKSPHQWSYCDQAQRYQLEIENIGHENVMSMCLATNAFDRVAAGSIDENEHHQQFKMNLAANNAKVATFRFEEGSTSSTDSFLKIGEKKRIFFDVRSSDEPTGSTVAPKQSNTVILIAYRSSNGTMRQWRRVIDGERRRLIALTAEILDLDTKSFSIHLKNCVAVSQAALSRVEILRIRTDRNEASTGIKNDCSTTVLPSVNRRVEIESEQTDTIVARLVPLSQGETIKESWLTTTTSVTPPKWPCPAEIHSTMDDEFASKIAEKIGILWKANIVNNEGLVTSFIGESFIDDPFVKLKTLKKDDSVLSSLRISCETTAKEISHNFSASHICELPITLLIQNKDLQRRPVSVSIKLSSKVREPVDGIHLVAPENRHQMWIDRPVRKQTIGIDDEAKLEMKWKITHAAVYDVGGANLSIEAIFEGSNDAVIFKVPSVLSVVKSSSYTVV.

The tract at residues Thr245–Pro287 is disordered. Over residues Ala255–Ser273 the composition is skewed to low complexity.

Functionally, plays a role in endoplasmic reticulum to Golgi apparatus trafficking at a very early stage. Involved in collagen secretion. In Caenorhabditis elegans, this protein is Trafficking protein particle complex subunit 8.